A 196-amino-acid chain; its full sequence is uncharacterized protein (196 aa).

Positions 21-35 (ESRRKDGSVRRERAV) are enriched in basic and acidic residues. Disordered regions lie at residues 21-53 (ESRRKDGSVRRERAVKPGYTAPEDIKRYRPGRG) and 65-196 (LQLS…KEKE). The segment covering 66–75 (QLSNDASTSK) has biased composition (polar residues). Composition is skewed to basic and acidic residues over residues 84–94 (ELEKEKLERPL), 100–143 (EKND…KDFK), and 173–196 (KMSKRENKKSINTVDKKTGYKEKE).

This is an uncharacterized protein from Schizosaccharomyces pombe (strain 972 / ATCC 24843) (Fission yeast).